The following is a 318-amino-acid chain: Transaldolase (318 aa).

The active-site Schiff-base intermediate with substrate is lysine 126.

Belongs to the transaldolase family. Type 1 subfamily. In terms of assembly, homodimer.

It localises to the cytoplasm. The catalysed reaction is D-sedoheptulose 7-phosphate + D-glyceraldehyde 3-phosphate = D-erythrose 4-phosphate + beta-D-fructose 6-phosphate. Its pathway is carbohydrate degradation; pentose phosphate pathway; D-glyceraldehyde 3-phosphate and beta-D-fructose 6-phosphate from D-ribose 5-phosphate and D-xylulose 5-phosphate (non-oxidative stage): step 2/3. In terms of biological role, transaldolase is important for the balance of metabolites in the pentose-phosphate pathway. In Variovorax paradoxus (strain S110), this protein is Transaldolase.